Here is a 36-residue protein sequence, read N- to C-terminus: ADPGPLQDFCLADLNSPLFINGYPCRNPALAISDDF.

This sequence belongs to the germin family. Homohexamer, possibly consisting of a trimer of dimers. Post-translationally, glycosylated.

With respect to regulation, inhibited by iodoacetamide and trans-epoxysuccinyl-L-leucylamido(4-guanidino)butane (E-64) but not by phenylmethylsulfonyl fluoride (PMSF), pepstatin-A, ethylenediamine tetra acetic acid (EDTA) or ethylene glycol tetraacetic acid (EGTA). In terms of biological role, cysteine protease able to degrade azocasein and benzoyl-arginine-beta-naphtylamide (BANA) in vitro. The polypeptide is Peruvianin-1 (Thevetia peruviana (Yellow oleander)).